We begin with the raw amino-acid sequence, 310 residues long: Membrane protein insertase YidC 2 (310 aa).

The signal sequence occupies residues 1–23 (MKKTLKRILFSSLSLSMLLLLTG). A lipid anchor (N-palmitoyl cysteine) is attached at Cys24. Residue Cys24 is the site of S-diacylglycerol cysteine attachment. Helical transmembrane passes span 33 to 53 (PYGVIWNTLGVPMANLITYFA), 58 to 78 (LGFGVAIIIVTVIVRVVILPL), 135 to 155 (FGGIGCLPLLIQMPFFSAIFF), 180 to 200 (LTVIIAILYFVQSWLSMQGVP), and 219 to 239 (VFMSISLPASVALYWFIGGIF). Residues 266–310 (NPPKAYKANNARKDVTNSTKATESNQAIITSKKTNRNAGKQKRRG) form a disordered region. Residues 281–297 (TNSTKATESNQAIITSK) are compositionally biased toward polar residues. Residues 298 to 310 (KTNRNAGKQKRRG) are compositionally biased toward basic residues.

This sequence belongs to the OXA1/ALB3/YidC family. Type 2 subfamily.

The protein resides in the cell membrane. In terms of biological role, required for the insertion and/or proper folding and/or complex formation of integral membrane proteins into the membrane. Involved in integration of membrane proteins that insert both dependently and independently of the Sec translocase complex, as well as at least some lipoproteins. This is Membrane protein insertase YidC 2 from Streptococcus agalactiae serotype V (strain ATCC BAA-611 / 2603 V/R).